We begin with the raw amino-acid sequence, 414 residues long: Transcriptional repressor protein YY1 (414 aa).

The interaction with the SMAD1/SMAD4 complex stretch occupies residues 1–170 (MASGDTLYIA…GGGSSSSGGG (170 aa)). The tract at residues 33-81 (VETIETTVVGEEEEEDDDDEDGGGGDHGGGGGHGHAGHHHHHHHHHHHP) is disordered. Residues 42 to 55 (GEEEEEDDDDEDGG) show a composition bias toward acidic residues. Residues 57–66 (GDHGGGGGHG) show a composition bias toward gly residues. A compositionally biased stretch (basic residues) spans 67-81 (HAGHHHHHHHHHHHP). A gly-rich region involved in interaction with HCFC1 region spans residues 116–260 (DDSDGLRAED…YSEYMTGKKL (145 aa)). Phosphoserine; by CK2 is present on Ser-118. The disordered stretch occupies residues 157 to 203 (GKSGGGGSSSSGGGRVKKGGGKKSGKKSYLSGGAGAAGGGGADPGNK). Gly residues predominate over residues 158 to 170 (KSGGGGSSSSGGG). Positions 171–182 (RVKKGGGKKSGK) are enriched in basic residues. Glycyl lysine isopeptide (Lys-Gly) (interchain with G-Cter in SUMO2) cross-links involve residues Lys-182 and Lys-183. Phosphoserine is present on Ser-187. Residues 188-199 (GGAGAAGGGGAD) are compositionally biased toward gly residues. Residues Lys-208 and Lys-230 each participate in a glycyl lysine isopeptide (Lys-Gly) (interchain with G-Cter in SUMO2) cross-link. The residue at position 247 (Ser-247) is a Phosphoserine. An involved in nuclear matrix association region spans residues 257 to 341 (GKKLPPGGIP…KAFVESSKLK (85 aa)). Residues Lys-286 and Lys-288 each participate in a glycyl lysine isopeptide (Lys-Gly) (interchain with G-Cter in SUMO2) cross-link. Residues 295–414 (TIACPHKGCT…LTHAKAKNNQ (120 aa)) are binding to DNA. 3 consecutive C2H2-type zinc fingers follow at residues 296–320 (IACPHKGCTKMFRDNSAMRKHLHTH), 325–347 (HVCAECGKAFVESSKLKRHQLVH), and 353–377 (FQCTFEGCGKRFSLDFNLRTHVRIH). Zn(2+) is bound by residues Cys-298, Cys-303, His-316, His-320, Cys-327, Cys-330, His-343, His-347, Cys-355, Cys-360, His-373, and His-377. Residues 333–371 (AFVESSKLKRHQLVHTGEKPFQCTFEGCGKRFSLDFNLR) are involved in repression of activated transcription. Residues 371 to 397 (RTHVRIHTGDRPYVCPFDGCNKKFAQS) form an involved in masking transactivation domain region. Thr-378 carries the post-translational modification Phosphothreonine. A C2H2-type 4 zinc finger spans residues 383-407 (YVCPFDGCNKKFAQSTNLKSHILTH). Zn(2+)-binding residues include Cys-385, Cys-390, His-403, and His-407. Residues Lys-409 and Lys-411 each participate in a glycyl lysine isopeptide (Lys-Gly) (interchain with G-Cter in SUMO2) cross-link.

Belongs to the YY transcription factor family. As to quaternary structure, interacts with YAF2 through the region encompassing the first and second zinc fingers. Component of the chromatin remodeling INO80 complex; specifically part of a complex module associated with the DBINO domain of INO80. Interacts with EED and EZH2; the interactions are indicative for an association with the PRC2/EED-EZH2 complex. Interacts with SFMBT2. Found in a complex with SMAD1 and SMAD4. Found in a complex with YY1, SIN3A and HDAC1. Accessory component of the polycomb repressive deubiquitinase (PR-DUB) complex, at least composed of BAP1, one of ASXL1, ASXL2 or (probably) ASXL3 and one of MBD5 or MBD6; the PR-DUB core associates with a number of accessory proteins, including FOXK1, FOXK2, KDM1B, HCFC1, YY1 and OGT. Interacts (via Gly-rich region) with HCFC1; the interaction is direct. Interacts (via C-terminal zinc-finger domains) with BAP1 (via ULD domain); the interaction is direct and requires HCFC1. Post-translationally, phosphorylation at Ser-118 by CK2 prevents proteolytic cleavage by caspase-7 (CASP7) during apoptosis. In terms of processing, proteolytically cleaved by caspase-7 (CASP7) in response to apoptosis. Phosphorylation at Ser-118 protects against proteolytic cleavage. Transiently poly-ADP-ribosylated by PARP1 upon DNA damage, with the effect of decreasing affinity of YY1 to its cognate DNA binding sites. Post-translationally, ubiquitinated.

It localises to the nucleus matrix. Multifunctional transcription factor that exhibits positive and negative control on a large number of cellular and viral genes by binding to sites overlapping the transcription start site. Binds to the consensus sequence 5'-CCGCCATNTT-3'; some genes have been shown to contain a longer binding motif allowing enhanced binding; the initial CG dinucleotide can be methylated greatly reducing the binding affinity. The effect on transcription regulation is depending upon the context in which it binds and diverse mechanisms of action include direct activation or repression, indirect activation or repression via cofactor recruitment, or activation or repression by disruption of binding sites or conformational DNA changes. Its activity is regulated by transcription factors and cytoplasmic proteins that have been shown to abrogate or completely inhibit YY1-mediated activation or repression. For example, it acts as a repressor in absence of adenovirus E1A protein but as an activator in its presence. Acts synergistically with the SMAD1 and SMAD4 in bone morphogenetic protein (BMP)-mediated cardiac-specific gene expression. Binds to SMAD binding elements (SBEs) (5'-GTCT/AGAC-3') within BMP response element (BMPRE) of cardiac activating regions. May play an important role in development and differentiation. Proposed to recruit the PRC2/EED-EZH2 complex to target genes that are transcriptional repressed. Involved in DNA repair. In vitro, binds to DNA recombination intermediate structures (Holliday junctions). Plays a role in regulating enhancer activation. Recruits the PR-DUB complex to specific gene-regulatory regions. In terms of biological role, proposed core component of the chromatin remodeling INO80 complex which is involved in transcriptional regulation, DNA replication and probably DNA repair; proposed to target the INO80 complex to YY1-responsive elements. This chain is Transcriptional repressor protein YY1 (YY1), found in Homo sapiens (Human).